The sequence spans 402 residues: CD2 homolog (402 aa).

Positions 1-16 (MIIIVIFLMCLKIVLN) are cleaved as a signal peptide. The Extracellular segment spans residues 17–204 (NIIIWSTLNQ…ILKYQNYLST (188 aa)). N-linked (GlcNAc...) asparagine; by host glycosylation is found at N25, N37, N52, N55, N72, N77, N81, N89, N95, N108, N125, N137, N148, N153, N169, N177, N184, and N190. 2 cysteine pairs are disulfide-bonded: C126–C191 and C133–C174. A helical membrane pass occupies residues 205 to 225 (LFYIIIFIVSGLIIGIFISII). Residues 226 to 402 (SVLSIRRKRK…ISLIHVDRII (177 aa)) lie on the Cytoplasmic side of the membrane. Positions 238 to 276 (VEEIESPPPSESNEEDISHDDTTSIHEPSPREPLLPKPY) are disordered. Residues 256–267 (HDDTTSIHEPSP) are compositionally biased toward basic and acidic residues. Tandem repeats lie at residues 302-307 (KPCPPP), 308-313 (KPCPPP), 314-319 (KPCPPP), 320-325 (KPCPPP), 326-331 (KPCSPP), 332-337 (KPCRPP), 338-343 (KPCPPP), 344-349 (KPCPPP), 350-355 (KPCPPP), 356-361 (KPCPPS), and 362-367 (KPCPSP). Positions 302–367 (KPCPPPKPCP…CPPSKPCPSP (66 aa)) are 11 X 6 AA tandem repeats of K-P-C-[PRS]-[P]-[PS]. Residues 319-386 (PKPCPPPKPC…PSIPLLPNIP (68 aa)) show a composition bias toward pro residues. Residues 319-388 (PKPCPPPKPC…IPLLPNIPPL (70 aa)) are disordered.

This sequence belongs to the asfivirus CD2 homolog protein family. In terms of assembly, both glycosylated and nonglycosylated forms interact (via C-terminus) with the host AP-1 complex. Post-translationally, cleaved into two fragments of 63 kDa and 26 kDa containing respectively the glycosylated N-terminus and the nonglycosylated C-terminus. A full-length 89-kDa glycosylated form also exists.

It is found in the host cell membrane. The protein resides in the virion membrane. The protein localises to the host Golgi apparatus. Its function is as follows. May play an immunosuppressive role by inhibiting lymphocyte proliferation and subsequently facilitating viral replication and generalization of infection. Responsible for viral hemadsorption, which may help viral spread. Increases virus replication in the tick vector at the step of virus uptake or replication in the tick gut. May play a role in the host Golgi reorganization to yield viral factories. May play a role in host cell penetration. The polypeptide is CD2 homolog (Ornithodoros (relapsing fever ticks)).